The primary structure comprises 223 residues: Sigma non-opioid intracellular receptor 1 (223 aa).

Residues 1 to 9 (MQWAVGRRW) lie on the Lumenal side of the membrane. A targeting to endoplasmic reticulum-associated lipid droplets region spans residues 2–8 (QWAVGRR). A helical transmembrane segment spans residues 10–30 (LWVALFLAAVAVLTQIVWLWL). Topologically, residues 31 to 223 (GTQNFVFQRE…LTTYLFGQDP (193 aa)) are cytoplasmic. The important for ligand-binding stretch occupies residues 99–106 (SLSEYVLL). Positions 177-223 (VIPSTLGFALADTVFSTQDFLTLFYTLRVYARALQLELTTYLFGQDP) are C-terminal hydrophobic region.

The protein belongs to the ERG2 family. As to quaternary structure, homotrimer. Forms a ternary complex with ANK2 and ITPR3. The complex is disrupted by agonists. Interacts with KCNA4. Interacts with KCNA2; cocaine consumption leads to increased interaction. Interacts with RNF112 in an oxidative stress-regulated manner. As to expression, ubiquitously expressed with higher expression in liver, kidney and steroid-producing tissues such as placenta, ovary and adrenal gland.

It localises to the nucleus inner membrane. It is found in the nucleus outer membrane. The protein resides in the nucleus envelope. Its subcellular location is the cytoplasmic vesicle. The protein localises to the endoplasmic reticulum membrane. It localises to the membrane. It is found in the lipid droplet. The protein resides in the cell junction. Its subcellular location is the cell membrane. The protein localises to the cell projection. It localises to the growth cone. It is found in the postsynaptic density membrane. In terms of biological role, functions in lipid transport from the endoplasmic reticulum and is involved in a wide array of cellular functions probably through regulation of the biogenesis of lipid microdomains at the plasma membrane. Involved in the regulation of different receptors it plays a role in BDNF signaling and EGF signaling. Also regulates ion channels like the potassium channel and could modulate neurotransmitter release. Plays a role in calcium signaling through modulation together with ANK2 of the ITP3R-dependent calcium efflux at the endoplasmic reticulum. Plays a role in several other cell functions including proliferation, survival and death. Originally identified for its ability to bind various psychoactive drugs it is involved in learning processes, memory and mood alteration. Necessary for proper mitochondrial axonal transport in motor neurons, in particular the retrograde movement of mitochondria. Plays a role in protecting cells against oxidative stress-induced cell death via its interaction with RNF112. The protein is Sigma non-opioid intracellular receptor 1 (SIGMAR1) of Cavia porcellus (Guinea pig).